The following is a 543-amino-acid chain: Cytochrome P450 2U1 (543 aa).

A run of 4 helical transmembrane segments spans residues 32–52, 58–78, 261–281, and 342–362; these read PTGGALLLLVLAALLGWSWLW, GIPPGPAPWPVVGNFGFVLLP, VCLNTQLLLVNICSWLYYLPF, and LFYIIGDLFIAGTDTTTNSLL. Cysteine 490 lines the heme pocket. Residues 495-515 traverse the membrane as a helical segment; sequence LAKMELFLMFVSLMQSFTFVL.

This sequence belongs to the cytochrome P450 family. Heme serves as cofactor.

The protein localises to the endoplasmic reticulum membrane. It localises to the microsome membrane. Its subcellular location is the mitochondrion inner membrane. The catalysed reaction is an omega-methyl-long-chain fatty acid + reduced [NADPH--hemoprotein reductase] + O2 = an omega-hydroxy-long-chain fatty acid + oxidized [NADPH--hemoprotein reductase] + H2O + H(+). It catalyses the reaction (5Z,8Z,11Z,14Z)-eicosatetraenoate + reduced [NADPH--hemoprotein reductase] + O2 = 19-hydroxy-(5Z,8Z,11Z,14Z)-eicosatetraenoate + oxidized [NADPH--hemoprotein reductase] + H2O + H(+). It carries out the reaction (5Z,8Z,11Z,14Z)-eicosatetraenoate + reduced [NADPH--hemoprotein reductase] + O2 = 20-hydroxy-(5Z,8Z,11Z,14Z)-eicosatetraenoate + oxidized [NADPH--hemoprotein reductase] + H2O + H(+). The enzyme catalyses N-[(5Z,8Z,11Z,14Z)-eicosatetraenoyl]-serotonin + reduced [NADPH--hemoprotein reductase] + O2 = 2-oxo-N-[(5Z,8Z,11Z,14Z)-eicosatetraenoyl]-serotonin + oxidized [NADPH--hemoprotein reductase] + H2O + H(+). A cytochrome P450 monooxygenase involved in the metabolism of arachidonic acid and its conjugates. Mechanistically, uses molecular oxygen inserting one oxygen atom into a substrate, and reducing the second into a water molecule, with two electrons provided by NADPH via cytochrome P450 reductase (CPR; NADPH-ferrihemoprotein reductase). Acts as an omega and omega-1 hydroxylase for arachidonic acid and possibly for other long chain fatty acids. May modulate the arachidonic acid signaling pathway and play a role in other fatty acid signaling processes. May down-regulate the biological activities of N-arachidonoyl-serotonin, an endocannabinoid that has anti-nociceptive effects through inhibition of fatty acid amide hydrolase FAAH, TRPV1 receptor and T-type calcium channels. Catalyzes C-2 oxidation of the indole ring of N-arachidonoyl-serotonin forming a less active product 2-oxo-N-arachidonoyl-serotonin. In Bos taurus (Bovine), this protein is Cytochrome P450 2U1 (CYP2U1).